The chain runs to 489 residues: Protein translocase subunit SecY (489 aa).

The Cytoplasmic segment spans residues 1–20 (MGWKDAAEPVLSRMPAVARP). The helical transmembrane segment at 21–47 (EGHVPFRRKLGWTGGILVLYFFLTNVT) threads the bilayer. The Extracellular portion of the chain corresponds to 48-59 (LFGLDAATANDL). The segment at residues 60–67 (FGQFRSIL) is an intramembrane region (helical). Residues 60–88 (FGQFRSILAGQQGSVLQLGIGPIVTASIV) traverse the membrane as a discontinuously helical segment. Residues 68-79 (AGQQGSVLQLGI) lie within the membrane without spanning it. Residues 80-88 (GPIVTASIV) constitute an intramembrane region (helical). At 89 to 110 (LQLLGGADLLGLDTDNNPRDQV) the chain is on the cytoplasmic side. Residues 111–135 (LYQGLQKLLVGVMICLTGLPMVFAG) form a helical membrane-spanning segment. The Extracellular portion of the chain corresponds to 136-153 (NFLPADQAVATSLGIGTV). The chain crosses the membrane as a helical span at residues 154-178 (GVKGLIFAQIAVGGVLILFMDEIVS). Topologically, residues 179–184 (KWGVGS) are cytoplasmic. The chain crosses the membrane as a helical span at residues 185–203 (GVGLFIIAGVSQQLVGGLF). Topologically, residues 204 to 244 (SWQGLGGTSGFFATWIGIITGAIELPASPTDLLSTVFLGQG) are extracellular. A helical membrane pass occupies residues 245-266 (QLLALITTLLIFGIVVYAESVR). Residues 267 to 291 (VEIPLSHARVKGARGRFPVKLIYAS) are Cytoplasmic-facing. A helical membrane pass occupies residues 292 to 313 (VLPMILVRALQANIQFLGRFLN). At 314 to 364 (SSWVGMPAWLGQYTSGQVTGGLLYYLAPIQSRSDWMWFLGLTSADPLDIAI) the chain is on the extracellular side. Residues 365 to 384 (RVLIDLIFMIVGGAVFAIFW) form a helical membrane-spanning segment. Topologically, residues 385-427 (VETTGMGPKSTAQQIQNSGMQIPGFRRNPQVIERVMERYIPQV) are cytoplasmic. The helical transmembrane segment at 428-446 (TVIGGALVGLLAVMANMLG) threads the bilayer. The Extracellular segment spans residues 447 to 450 (TIGA). A helical transmembrane segment spans residues 451–465 (VSGTGLLLTVSITYK). The Cytoplasmic segment spans residues 466–488 (LYEEIAEEQLMEMHPMMRNMFGS).

It belongs to the SecY/SEC61-alpha family. Component of the Sec protein translocase complex. Heterotrimer consisting of alpha (SecY), beta (SecG) and gamma (SecE) subunits. The heterotrimers can form oligomers, although 1 heterotrimer is thought to be able to translocate proteins. Interacts with the ribosome. May interact with SecDF, and other proteins may be involved.

It is found in the cell membrane. The central subunit of the protein translocation channel SecYEG. Consists of two halves formed by TMs 1-5 and 6-10. These two domains form a lateral gate at the front which open onto the bilayer between TMs 2 and 7, and are clamped together by SecE at the back. The channel is closed by both a pore ring composed of hydrophobic SecY resides and a short helix (helix 2A) on the extracellular side of the membrane which forms a plug. The plug probably moves laterally to allow the channel to open. The ring and the pore may move independently. This is Protein translocase subunit SecY from Haloferax volcanii (strain ATCC 29605 / DSM 3757 / JCM 8879 / NBRC 14742 / NCIMB 2012 / VKM B-1768 / DS2) (Halobacterium volcanii).